We begin with the raw amino-acid sequence, 362 residues long: Chorismate synthase (362 aa).

Residue Arg46 coordinates NADP(+). FMN-binding positions include 122–124 (RSS), 238–239 (NA), Gly278, 293–297 (KPTPS), and Arg319.

This sequence belongs to the chorismate synthase family. As to quaternary structure, homotetramer. FMNH2 is required as a cofactor.

The catalysed reaction is 5-O-(1-carboxyvinyl)-3-phosphoshikimate = chorismate + phosphate. Its pathway is metabolic intermediate biosynthesis; chorismate biosynthesis; chorismate from D-erythrose 4-phosphate and phosphoenolpyruvate: step 7/7. In terms of biological role, catalyzes the anti-1,4-elimination of the C-3 phosphate and the C-6 proR hydrogen from 5-enolpyruvylshikimate-3-phosphate (EPSP) to yield chorismate, which is the branch point compound that serves as the starting substrate for the three terminal pathways of aromatic amino acid biosynthesis. This reaction introduces a second double bond into the aromatic ring system. The chain is Chorismate synthase from Campylobacter jejuni subsp. jejuni serotype O:6 (strain 81116 / NCTC 11828).